A 236-amino-acid polypeptide reads, in one-letter code: uncharacterized protein (236 aa).

The protein resides in the plastid. The protein localises to the chloroplast. This is an uncharacterized protein from Chlorella vulgaris (Green alga).